Consider the following 278-residue polypeptide: Formamidopyrimidine-DNA glycosylase (278 aa).

The Schiff-base intermediate with DNA role is filled by Pro2. The active-site Proton donor is Glu3. Lys58 (proton donor; for beta-elimination activity) is an active-site residue. DNA is bound by residues His92 and Arg111. An FPG-type zinc finger spans residues 239–273 (HVYGKKGVPCERCGTPIEKIKVAQRGTHFCPKCQI). Arg263 functions as the Proton donor; for delta-elimination activity in the catalytic mechanism.

Belongs to the FPG family. As to quaternary structure, monomer. Requires Zn(2+) as cofactor.

The enzyme catalyses Hydrolysis of DNA containing ring-opened 7-methylguanine residues, releasing 2,6-diamino-4-hydroxy-5-(N-methyl)formamidopyrimidine.. The catalysed reaction is 2'-deoxyribonucleotide-(2'-deoxyribose 5'-phosphate)-2'-deoxyribonucleotide-DNA = a 3'-end 2'-deoxyribonucleotide-(2,3-dehydro-2,3-deoxyribose 5'-phosphate)-DNA + a 5'-end 5'-phospho-2'-deoxyribonucleoside-DNA + H(+). Functionally, involved in base excision repair of DNA damaged by oxidation or by mutagenic agents. Acts as a DNA glycosylase that recognizes and removes damaged bases. Has a preference for oxidized purines, such as 7,8-dihydro-8-oxoguanine (8-oxoG). Has AP (apurinic/apyrimidinic) lyase activity and introduces nicks in the DNA strand. Cleaves the DNA backbone by beta-delta elimination to generate a single-strand break at the site of the removed base with both 3'- and 5'-phosphates. The polypeptide is Formamidopyrimidine-DNA glycosylase (Latilactobacillus sakei subsp. sakei (strain 23K) (Lactobacillus sakei subsp. sakei)).